We begin with the raw amino-acid sequence, 284 residues long: F-box only protein 6 (284 aa).

In terms of domain architecture, F-box spans 1-48; sequence MVNINELPENILLELFTHVPAPQLLRNCRLVCSLWRDLIDVMTLWKRK. One can recognise an FBA domain in the interval 69-250; sequence FYILCSLQRN…VTNSSIIVSH (182 aa). 5 positions are modified to phosphoserine: S249, S268, S275, S278, and S283.

In terms of assembly, part of a SCF (SKP1-cullin-F-box) protein ligase complex. Interacts with VCP, CHEK1 and CUL1.

The protein resides in the cytoplasm. Its pathway is protein modification; protein ubiquitination. Substrate-recognition component of some SCF (SKP1-CUL1-F-box protein)-type E3 ubiquitin ligase complexes. Involved in endoplasmic reticulum-associated degradation pathway (ERAD) for misfolded lumenal proteins by recognizing and binding sugar chains on unfolded glycoproteins that are retrotranslocated into the cytosol and promoting their ubiquitination and subsequent degradation. Able to recognize and bind denatured glycoproteins, which are modified with not only high-mannose but also complex-type oligosaccharides. Also recognizes sulfated glycans. Also involved in DNA damage response by specifically recognizing activated CHEK1 (phosphorylated on 'Ser-345'), promoting its ubiquitination and degradation. Ubiquitination of CHEK1 is required to ensure that activated CHEK1 does not accumulate as cells progress through S phase, or when replication forks encounter transient impediments during normal DNA replication. This is F-box only protein 6 (Fbxo6) from Rattus norvegicus (Rat).